Reading from the N-terminus, the 238-residue chain is Tetrahydromethanopterin S-methyltransferase subunit A 1 (238 aa).

Residues 2 to 218 (VEKKSPAEGW…RMFAGMYSGK (217 aa)) are Cytoplasmic-facing. Histidine 84 serves as a coordination point for 5-hydroxybenzimidazolylcob(I)amide. The chain crosses the membrane as a helical span at residues 219-237 (VQGIMIGLAFTLTLGILLL). Residue valine 238 is a topological domain, extracellular.

It belongs to the MtrA family. In terms of assembly, the complex is composed of 8 subunits; MtrA, MtrB, MtrC, MtrD, MtrE, MtrF, MtrG and MtrH. The cofactor is 5-hydroxybenzimidazolylcob(I)amide.

The protein resides in the cell membrane. The catalysed reaction is 5-methyl-5,6,7,8-tetrahydromethanopterin + coenzyme M + 2 Na(+)(in) = 5,6,7,8-tetrahydromethanopterin + methyl-coenzyme M + 2 Na(+)(out). Its pathway is one-carbon metabolism; methanogenesis from CO(2); methyl-coenzyme M from 5,10-methylene-5,6,7,8-tetrahydromethanopterin: step 2/2. Functionally, part of a complex that catalyzes the formation of methyl-coenzyme M and tetrahydromethanopterin from coenzyme M and methyl-tetrahydromethanopterin. This is an energy-conserving, sodium-ion translocating step. This Methanothermobacter marburgensis (strain ATCC BAA-927 / DSM 2133 / JCM 14651 / NBRC 100331 / OCM 82 / Marburg) (Methanobacterium thermoautotrophicum) protein is Tetrahydromethanopterin S-methyltransferase subunit A 1.